The sequence spans 347 residues: Dihydroorotate dehydrogenase (quinone) (347 aa).

Residues 62–66 (AGLDK) and Ala86 each bind FMN. Residue Lys66 participates in substrate binding. 111-115 (NRMGF) is a binding site for substrate. 2 residues coordinate FMN: Asn139 and Asn172. Asn172 is a substrate binding site. Ser175 serves as the catalytic Nucleophile. Asn177 contributes to the substrate binding site. The FMN site is built by Lys217 and Thr245. Residue 246 to 247 (NT) participates in substrate binding. FMN-binding positions include Gly268, Gly297, and 318 to 319 (YT).

The protein belongs to the dihydroorotate dehydrogenase family. Type 2 subfamily. As to quaternary structure, monomer. Requires FMN as cofactor.

The protein resides in the cell membrane. It carries out the reaction (S)-dihydroorotate + a quinone = orotate + a quinol. Its pathway is pyrimidine metabolism; UMP biosynthesis via de novo pathway; orotate from (S)-dihydroorotate (quinone route): step 1/1. Its function is as follows. Catalyzes the conversion of dihydroorotate to orotate with quinone as electron acceptor. In Coxiella burnetii (strain CbuK_Q154) (Coxiella burnetii (strain Q154)), this protein is Dihydroorotate dehydrogenase (quinone).